Consider the following 217-residue polypeptide: Cytidylate kinase (217 aa).

An ATP-binding site is contributed by glycine 9–threonine 17.

This sequence belongs to the cytidylate kinase family. Type 1 subfamily.

It is found in the cytoplasm. It catalyses the reaction CMP + ATP = CDP + ADP. It carries out the reaction dCMP + ATP = dCDP + ADP. The protein is Cytidylate kinase of Clostridium acetobutylicum (strain ATCC 824 / DSM 792 / JCM 1419 / IAM 19013 / LMG 5710 / NBRC 13948 / NRRL B-527 / VKM B-1787 / 2291 / W).